The primary structure comprises 336 residues: MENMFRRVIFEKKALDYPMGRDILRQFENTDIEIRYSETGRITGIPGKDEAQSFFEGKNTLVVGVRRELDFQTCKPSANYQLPIVSGCAAMCEYCYLNTHGGKKPYVKINVNLDDILSKAGEYIEKRKPDITVFEGAAISDPVPVERYSGALKKAIEYFGKNEYSRFRFVTKYADISELLAVQHNNHTTIRFSINTPRVIKNYEHRTSSLEDRIESAYNILNSGYKTGFIVGPVFLYENWKKEYEELLKKASDKLGDKELEFEIISHRFTTSAKNKILKVFPNTKLPMDDEARKFKFGQFGYGKYVYDKDDMQEIKEFFINNINLYFNKATIKYII.

One can recognise a Radical SAM core domain in the interval 74–305 (CKPSANYQLP…KFGQFGYGKY (232 aa)). Residues Cys-88, Cys-92, and Cys-95 each coordinate [4Fe-4S] cluster. The H-T-H motif DNA-binding region spans 215–232 (ESAYNILNSGYKTGFIVG).

Belongs to the radical SAM superfamily. SPL family. As to quaternary structure, monomer or homodimer. [4Fe-4S] cluster is required as a cofactor. It depends on S-adenosyl-L-methionine as a cofactor.

It carries out the reaction (5R)-5,6-dihydro-5-(thymidin-7-yl)thymidine in DNA = a thymidine dimer in DNA. Involved in repair of UV radiation-induced DNA damage during spore germination. Can repair thymine dimer 5-thyminyl-5,6-dihydrothymine (known as spore photoproduct (SP)) by in situ monomerization of SP to two thymines. In Clostridium acetobutylicum (strain ATCC 824 / DSM 792 / JCM 1419 / IAM 19013 / LMG 5710 / NBRC 13948 / NRRL B-527 / VKM B-1787 / 2291 / W), this protein is Spore photoproduct lyase (splB).